Consider the following 197-residue polypeptide: Potassium-transporting ATPase KdpC subunit (197 aa).

Residues 9–29 traverse the membrane as a helical segment; the sequence is LVVTLLLAALLCGAYPVLVTG.

This sequence belongs to the KdpC family. As to quaternary structure, the system is composed of three essential subunits: KdpA, KdpB and KdpC.

The protein localises to the cell inner membrane. Its function is as follows. Part of the high-affinity ATP-driven potassium transport (or Kdp) system, which catalyzes the hydrolysis of ATP coupled with the electrogenic transport of potassium into the cytoplasm. This subunit acts as a catalytic chaperone that increases the ATP-binding affinity of the ATP-hydrolyzing subunit KdpB by the formation of a transient KdpB/KdpC/ATP ternary complex. The chain is Potassium-transporting ATPase KdpC subunit from Nitratidesulfovibrio vulgaris (strain DSM 19637 / Miyazaki F) (Desulfovibrio vulgaris).